The following is a 92-amino-acid chain: Small ribosomal subunit protein uS19 (92 aa).

The protein belongs to the universal ribosomal protein uS19 family.

Protein S19 forms a complex with S13 that binds strongly to the 16S ribosomal RNA. This chain is Small ribosomal subunit protein uS19, found in Magnetococcus marinus (strain ATCC BAA-1437 / JCM 17883 / MC-1).